The following is a 297-amino-acid chain: tRNA uridine(34) hydroxylase (297 aa).

The Rhodanese domain maps to 133-228 (RGEEVVFFDG…YGETFKDQGL (96 aa)). Catalysis depends on C188, which acts as the Cysteine persulfide intermediate.

Belongs to the TrhO family.

The catalysed reaction is uridine(34) in tRNA + AH2 + O2 = 5-hydroxyuridine(34) in tRNA + A + H2O. Its function is as follows. Catalyzes oxygen-dependent 5-hydroxyuridine (ho5U) modification at position 34 in tRNAs. This Arthrobacter sp. (strain FB24) protein is tRNA uridine(34) hydroxylase.